The sequence spans 330 residues: Beta-ketoacyl-[acyl-carrier-protein] synthase III (330 aa).

Active-site residues include C114 and H255. Residues 256–260 are ACP-binding; that stretch reads QANQR. Residue N285 is part of the active site.

The protein belongs to the thiolase-like superfamily. FabH family. In terms of assembly, homodimer.

The protein localises to the cytoplasm. It catalyses the reaction malonyl-[ACP] + acetyl-CoA + H(+) = 3-oxobutanoyl-[ACP] + CO2 + CoA. Its pathway is lipid metabolism; fatty acid biosynthesis. Catalyzes the condensation reaction of fatty acid synthesis by the addition to an acyl acceptor of two carbons from malonyl-ACP. Catalyzes the first condensation reaction which initiates fatty acid synthesis and may therefore play a role in governing the total rate of fatty acid production. Possesses both acetoacetyl-ACP synthase and acetyl transacylase activities. Its substrate specificity determines the biosynthesis of branched-chain and/or straight-chain of fatty acids. The chain is Beta-ketoacyl-[acyl-carrier-protein] synthase III from Nostoc sp. (strain PCC 7120 / SAG 25.82 / UTEX 2576).